The chain runs to 437 residues: Xylose isomerase (437 aa).

Catalysis depends on residues histidine 101 and aspartate 104. The Mg(2+) site is built by glutamate 232, glutamate 268, histidine 271, aspartate 296, aspartate 307, aspartate 309, and aspartate 339.

The protein belongs to the xylose isomerase family. As to quaternary structure, homotetramer. Requires Mg(2+) as cofactor.

Its subcellular location is the cytoplasm. It catalyses the reaction alpha-D-xylose = alpha-D-xylulofuranose. This Actinobacillus succinogenes (strain ATCC 55618 / DSM 22257 / CCUG 43843 / 130Z) protein is Xylose isomerase.